A 365-amino-acid chain; its full sequence is Aminomethyltransferase (365 aa).

The protein belongs to the GcvT family. The glycine cleavage system is composed of four proteins: P, T, L and H.

It catalyses the reaction N(6)-[(R)-S(8)-aminomethyldihydrolipoyl]-L-lysyl-[protein] + (6S)-5,6,7,8-tetrahydrofolate = N(6)-[(R)-dihydrolipoyl]-L-lysyl-[protein] + (6R)-5,10-methylene-5,6,7,8-tetrahydrofolate + NH4(+). Its function is as follows. The glycine cleavage system catalyzes the degradation of glycine. In Natranaerobius thermophilus (strain ATCC BAA-1301 / DSM 18059 / JW/NM-WN-LF), this protein is Aminomethyltransferase.